We begin with the raw amino-acid sequence, 185 residues long: MLNELFNECETKMKSSVNHMLRDFKTLRTGKVTTSVLDNVKIDYYGTLTALDQVGSILVADATTIIINPWEKNLLNIIDSAISKANIGATPNNDGSQIKLFFPAMTVEQRQESVKQMKGMGEHAKVAVRNDRKNANDKIKKSEKDKEITADESKSAQDNIQKITDKYISEIDSILKTKEAEILKV.

Basic and acidic residues predominate over residues 131 to 155 (DRKNANDKIKKSEKDKEITADESKS). Residues 131-156 (DRKNANDKIKKSEKDKEITADESKSA) are disordered.

Belongs to the RRF family.

It is found in the cytoplasm. Its function is as follows. Responsible for the release of ribosomes from messenger RNA at the termination of protein biosynthesis. May increase the efficiency of translation by recycling ribosomes from one round of translation to another. The protein is Ribosome-recycling factor of Sulfurimonas denitrificans (strain ATCC 33889 / DSM 1251) (Thiomicrospira denitrificans (strain ATCC 33889 / DSM 1251)).